The sequence spans 566 residues: MKKAKAIFSLVVALMVLAIFCFAQNTGSTATTAAAAVDSNNDDWLHCKGNKIYDMYGNEVWLTGANWFGFNCSENCFHGAWYDVKTILTSIADRGINLLRIPISTELLYSWMIGKPNPVSSVTASNNPPYHVVNPDFYDPETDDVKNSMEIFDIIMGYCKELGIKVMIDIHSPDANNSGHNYELWYGKETSTCGVVTTKMWIDTLVWLADKYKNDDTIIAFDLKNEPHGKRGYTAEVPKLLAKWDNSTDENNWKYAAETCAKAILEVNPKVLIVIEGVEQYPKTEKGYTYDTPDIWGATGDASPWYSAWWGGNLRGVKDYPIDLGPLNSQIVYSPHDYGPSVYAQPWFEKDFTMQTLLDDYWYDTWAYIHDQGIAPILIGEWGGHMDGGKNQKWMTLLRDYIVQNRIHHTFWCINPNSGDTGGLLGNDWSTWDEAKYALLKPALWQTKDGKFIGLDHKIPLGSKGISLGEYYGTPQASDPPATPTATPTKPAASSTPSFIYGDINSDGNVNSTDLGILKRIIVKNPPASANMDAADVNADGKVNSTDYTVLKRYLLRSIDKLPHTT.

Positions 1-30 (MKKAKAIFSLVVALMVLAIFCFAQNTGSTA) are cleaved as a signal peptide. Glutamate 226 acts as the Proton donor in catalysis. Catalysis depends on glutamate 381, which acts as the Nucleophile. Residues 473–494 (GTPQASDPPATPTATPTKPAAS) form a disordered region. Residues 474-494 (TPQASDPPATPTATPTKPAAS) are compositionally biased toward low complexity. Residues 497 to 564 (PSFIYGDINS…LLRSIDKLPH (68 aa)) form the Dockerin domain.

The protein belongs to the glycosyl hydrolase 5 (cellulase A) family.

It carries out the reaction Endohydrolysis of (1-&gt;4)-beta-D-glucosidic linkages in cellulose, lichenin and cereal beta-D-glucans.. Its function is as follows. This enzyme catalyzes the endohydrolysis of 1,4-beta-glucosidic linkages in cellulose, lichenin and cereal beta-D-glucans. This Acetivibrio thermocellus (strain ATCC 27405 / DSM 1237 / JCM 9322 / NBRC 103400 / NCIMB 10682 / NRRL B-4536 / VPI 7372) (Clostridium thermocellum) protein is Endoglucanase G (celG).